The following is a 116-amino-acid chain: Large ribosomal subunit protein uL24 (116 aa).

The protein belongs to the universal ribosomal protein uL24 family. In terms of assembly, part of the 50S ribosomal subunit.

In terms of biological role, one of two assembly initiator proteins, it binds directly to the 5'-end of the 23S rRNA, where it nucleates assembly of the 50S subunit. Functionally, located at the polypeptide exit tunnel on the outside of the subunit. The protein is Large ribosomal subunit protein uL24 of Methanothrix thermoacetophila (strain DSM 6194 / JCM 14653 / NBRC 101360 / PT) (Methanosaeta thermophila).